Here is a 571-residue protein sequence, read N- to C-terminus: Proline--tRNA ligase (571 aa).

The protein belongs to the class-II aminoacyl-tRNA synthetase family. ProS type 1 subfamily. As to quaternary structure, homodimer.

The protein localises to the cytoplasm. The catalysed reaction is tRNA(Pro) + L-proline + ATP = L-prolyl-tRNA(Pro) + AMP + diphosphate. In terms of biological role, catalyzes the attachment of proline to tRNA(Pro) in a two-step reaction: proline is first activated by ATP to form Pro-AMP and then transferred to the acceptor end of tRNA(Pro). As ProRS can inadvertently accommodate and process non-cognate amino acids such as alanine and cysteine, to avoid such errors it has two additional distinct editing activities against alanine. One activity is designated as 'pretransfer' editing and involves the tRNA(Pro)-independent hydrolysis of activated Ala-AMP. The other activity is designated 'posttransfer' editing and involves deacylation of mischarged Ala-tRNA(Pro). The misacylated Cys-tRNA(Pro) is not edited by ProRS. In Shewanella putrefaciens (strain CN-32 / ATCC BAA-453), this protein is Proline--tRNA ligase.